Here is a 109-residue protein sequence, read N- to C-terminus: Insulin (109 aa).

Positions 1–24 (MAPWMHLLTVLALLALWGPNSVQA) are cleaved as a signal peptide. Cystine bridges form between C31-C93, C43-C106, and C92-C97. Positions 56–84 (ELEDLQVEQAELGLEAGGLQPSALEMILQ) are cleaved as a propeptide — c peptide.

Belongs to the insulin family. Heterodimer of a B chain and an A chain linked by two disulfide bonds.

It is found in the secreted. Functionally, insulin decreases blood glucose concentration. It increases cell permeability to monosaccharides, amino acids and fatty acids. It accelerates glycolysis, the pentose phosphate cycle, and glycogen synthesis in liver. This chain is Insulin (INS), found in Octodon degus (Degu).